A 668-amino-acid polypeptide reads, in one-letter code: MIDFFLKSEYLPAGDQPKAIKEIENSILLGNKYQTLKGVTGSGKTFTIANIIKDLNRPALVVSHNKTLAAQLYREFKDFFPNNAVEYFVSYYDYYQPESYVPSKDLFIEKEATINTEIEIKRIRTVTSLAKRRDVIVVATVSSIYALGSPDFFKKSAREFFVGQKISIKEISDIFVELYYERTLMNLERDKFSIKGDIVEIWPSSEHGEFAYRICLDFDEIVEIYRVSSFSKKKLGATNSFTLFAKSYFVIPYENVLEAIPKISHDLSLQCQYFKDNGRLVEAERLKQRVEYDLEMLRETGFCSGIENYSKYLSGSTMERPYCLFDFFPKDYLLFVDESHVTLPQFRGMYNGDHSRKLNLVNFGFRLPAALENRPLKYDEFEALINQVVFVSATPGVEENEKSSVVVDQIIRPTGLVDPEIITRRSDGQMEDLYSEIQKRVALKERVLITTLTKKMSEDLTEYLVNLGVRAKYLHSELDTLERVEVISLLRKSEIDVIVGINLLREGLDIPEVSLVAILDADKVGFLRSTTSLIQTIGRAARNSNGLVIMYYDKISLAMREAIEETNRRRQIQIDYNEKNNITPKTIVKKIQNILEKELNNKNKNVGYDFEKIISDERLSKKKLIDKLKFDLEEAVNDERFEDAIVLRDKIKELSSKISIARNKKREV.

Positions 25 to 170 (NSILLGNKYQ…FVGQKISIKE (146 aa)) constitute a Helicase ATP-binding domain. 38-45 (GVTGSGKT) provides a ligand contact to ATP. The Beta-hairpin signature appears at 91 to 114 (YYDYYQPESYVPSKDLFIEKEATI). Residues 429–595 (QMEDLYSEIQ…TIVKKIQNIL (167 aa)) form the Helicase C-terminal domain. Residues 622–657 (KKLIDKLKFDLEEAVNDERFEDAIVLRDKIKELSSK) form the UVR domain.

The protein belongs to the UvrB family. Forms a heterotetramer with UvrA during the search for lesions. Interacts with UvrC in an incision complex.

The protein localises to the cytoplasm. Functionally, the UvrABC repair system catalyzes the recognition and processing of DNA lesions. A damage recognition complex composed of 2 UvrA and 2 UvrB subunits scans DNA for abnormalities. Upon binding of the UvrA(2)B(2) complex to a putative damaged site, the DNA wraps around one UvrB monomer. DNA wrap is dependent on ATP binding by UvrB and probably causes local melting of the DNA helix, facilitating insertion of UvrB beta-hairpin between the DNA strands. Then UvrB probes one DNA strand for the presence of a lesion. If a lesion is found the UvrA subunits dissociate and the UvrB-DNA preincision complex is formed. This complex is subsequently bound by UvrC and the second UvrB is released. If no lesion is found, the DNA wraps around the other UvrB subunit that will check the other stand for damage. In Borreliella burgdorferi (strain ZS7) (Borrelia burgdorferi), this protein is UvrABC system protein B.